Reading from the N-terminus, the 787-residue chain is Phenylalanine--tRNA ligase beta subunit (787 aa).

The 111-residue stretch at A39–R149 folds into the tRNA-binding domain. A B5 domain is found at P400–D475. D453, D459, E462, and E463 together coordinate Mg(2+). An FDX-ACB domain is found at S694–R786.

Belongs to the phenylalanyl-tRNA synthetase beta subunit family. Type 1 subfamily. As to quaternary structure, tetramer of two alpha and two beta subunits. Mg(2+) is required as a cofactor.

The protein resides in the cytoplasm. The catalysed reaction is tRNA(Phe) + L-phenylalanine + ATP = L-phenylalanyl-tRNA(Phe) + AMP + diphosphate + H(+). This Neisseria meningitidis serogroup A / serotype 4A (strain DSM 15465 / Z2491) protein is Phenylalanine--tRNA ligase beta subunit (pheT).